Consider the following 958-residue polypeptide: Valine--tRNA ligase (958 aa).

The 'HIGH' region motif lies at 42-52 (PNVTGSLHMGH). The short motif at 554 to 558 (KMSKS) is the 'KMSKS' region element. Residue Lys-557 participates in ATP binding. A coiled-coil region spans residues 887–956 (LVDVAAEMAR…TEQKAEFAKL (70 aa)).

Belongs to the class-I aminoacyl-tRNA synthetase family. ValS type 1 subfamily. In terms of assembly, monomer.

Its subcellular location is the cytoplasm. The enzyme catalyses tRNA(Val) + L-valine + ATP = L-valyl-tRNA(Val) + AMP + diphosphate. Functionally, catalyzes the attachment of valine to tRNA(Val). As ValRS can inadvertently accommodate and process structurally similar amino acids such as threonine, to avoid such errors, it has a 'posttransfer' editing activity that hydrolyzes mischarged Thr-tRNA(Val) in a tRNA-dependent manner. This Shewanella oneidensis (strain ATCC 700550 / JCM 31522 / CIP 106686 / LMG 19005 / NCIMB 14063 / MR-1) protein is Valine--tRNA ligase.